Here is a 161-residue protein sequence, read N- to C-terminus: MKIRVGFGYDVHALVPDRELWLGGIKIEHTLGLLGHSDADVLIHAICDALLGAANMRDIGYHFPDTAGEYKNIDSKILLRDTMRLLREAGYELGNIDATVAAERPKLNPHIPLMKKTLAEVMNVDEEDISIKATTTEKLGFTGRQEGISAYATVLIQRMGS.

Positions 10 and 12 each coordinate a divalent metal cation. 4-CDP-2-C-methyl-D-erythritol 2-phosphate is bound by residues aspartate 10–histidine 12 and histidine 36–serine 37. Residue histidine 44 participates in a divalent metal cation binding. Residues aspartate 58–glycine 60, threonine 134–glutamate 137, phenylalanine 141, and arginine 144 contribute to the 4-CDP-2-C-methyl-D-erythritol 2-phosphate site.

It belongs to the IspF family. Homotrimer. The cofactor is a divalent metal cation.

The enzyme catalyses 4-CDP-2-C-methyl-D-erythritol 2-phosphate = 2-C-methyl-D-erythritol 2,4-cyclic diphosphate + CMP. It participates in isoprenoid biosynthesis; isopentenyl diphosphate biosynthesis via DXP pathway; isopentenyl diphosphate from 1-deoxy-D-xylulose 5-phosphate: step 4/6. Functionally, involved in the biosynthesis of isopentenyl diphosphate (IPP) and dimethylallyl diphosphate (DMAPP), two major building blocks of isoprenoid compounds. Catalyzes the conversion of 4-diphosphocytidyl-2-C-methyl-D-erythritol 2-phosphate (CDP-ME2P) to 2-C-methyl-D-erythritol 2,4-cyclodiphosphate (ME-CPP) with a corresponding release of cytidine 5-monophosphate (CMP). The protein is 2-C-methyl-D-erythritol 2,4-cyclodiphosphate synthase of Parabacteroides distasonis (strain ATCC 8503 / DSM 20701 / CIP 104284 / JCM 5825 / NCTC 11152).